The primary structure comprises 440 residues: Ribulose bisphosphate carboxylase large chain (440 aa).

Lys4 is subject to N6,N6,N6-trimethyllysine. Positions 113 and 163 each coordinate substrate. Lys165 (proton acceptor) is an active-site residue. Lys167 contacts substrate. Residues Lys191, Asp193, and Glu194 each contribute to the Mg(2+) site. Lys191 carries the post-translational modification N6-carboxylysine. The Proton acceptor role is filled by His284. Residues Arg285, His317, and Ser369 each contribute to the substrate site.

The protein belongs to the RuBisCO large chain family. Type I subfamily. Heterohexadecamer of 8 large chains and 8 small chains; disulfide-linked. The disulfide link is formed within the large subunit homodimers. The cofactor is Mg(2+). In terms of processing, the disulfide bond which can form in the large chain dimeric partners within the hexadecamer appears to be associated with oxidative stress and protein turnover.

It is found in the plastid. The protein localises to the chloroplast. The catalysed reaction is 2 (2R)-3-phosphoglycerate + 2 H(+) = D-ribulose 1,5-bisphosphate + CO2 + H2O. It catalyses the reaction D-ribulose 1,5-bisphosphate + O2 = 2-phosphoglycolate + (2R)-3-phosphoglycerate + 2 H(+). RuBisCO catalyzes two reactions: the carboxylation of D-ribulose 1,5-bisphosphate, the primary event in carbon dioxide fixation, as well as the oxidative fragmentation of the pentose substrate in the photorespiration process. Both reactions occur simultaneously and in competition at the same active site. The sequence is that of Ribulose bisphosphate carboxylase large chain from Pteris vittata (Chinese ladder brake).